A 445-amino-acid polypeptide reads, in one-letter code: Gamma-glutamyl phosphate reductase (445 aa).

Belongs to the gamma-glutamyl phosphate reductase family.

The protein localises to the cytoplasm. It carries out the reaction L-glutamate 5-semialdehyde + phosphate + NADP(+) = L-glutamyl 5-phosphate + NADPH + H(+). It participates in amino-acid biosynthesis; L-proline biosynthesis; L-glutamate 5-semialdehyde from L-glutamate: step 2/2. Catalyzes the NADPH-dependent reduction of L-glutamate 5-phosphate into L-glutamate 5-semialdehyde and phosphate. The product spontaneously undergoes cyclization to form 1-pyrroline-5-carboxylate. The sequence is that of Gamma-glutamyl phosphate reductase from Saccharopolyspora erythraea (strain ATCC 11635 / DSM 40517 / JCM 4748 / NBRC 13426 / NCIMB 8594 / NRRL 2338).